The chain runs to 326 residues: MNGKIALEEHFATEETLMDSAGFVPDKDWPELRSRLLDIQDRRVRLMDEHGIETMILSLNAPAVQAIADSTRANETARRANDFLAEQVAKQPTRFRGFAALPMQDPELAARELERCVKELGFVGALVNGFSQDNRSAVPLYYDMAQYWPFWETVQALDVPFYLHPRNPLPSDARIYDGHAWLLGPTWAFGQETAVHALRLMGSGLFDKYPALKIILGHMGEGLPYSMWRIDHRNAWIKTTPKYPAKRKIVDYFNENFYLTTSGNFRTQTLIDAILEIGADRILFSTDWPFENIDHAADWFENTSISEADRKKIGWGNAQNLFKLNR.

Mn(2+) is bound by residues E8, H10, H164, and D287. Residue D287 is part of the active site.

This sequence belongs to the metallo-dependent hydrolases superfamily. ACMSD family. Homotetramer. Requires Mn(2+) as cofactor.

It catalyses the reaction 2,6-dihydroxybenzoate + H(+) = resorcinol + CO2. The enzyme catalyses 2,3-dihydroxybenzoate + H(+) = catechol + CO2. Its pathway is aromatic compound metabolism. With respect to regulation, activity is inhibited by 2-nitroresorcinol (2-NR). Its function is as follows. Involved in the gamma-resorcylate (2,6-dihydroxybenzoate) catabolism. Catalyzes the reversible decarboxylation of gamma-resorcylate to resorcinol. Also catalyzes the decarboxylation of 2,3-dihydroxybenzoate to catechol, 2,4,6-trihydroxybenzoate to benzene-1,3,5-triol, and 2,6-dihydroxy-4-methylbenzoate to 5-methylbenzene-1,3-diol. The polypeptide is Gamma-resorcylate decarboxylase (Polaromonas sp. (strain JS666 / ATCC BAA-500)).